The following is a 145-amino-acid chain: D-aminoacyl-tRNA deacylase (145 aa).

The short motif at 137–138 (GP) is the Gly-cisPro motif, important for rejection of L-amino acids element.

The protein belongs to the DTD family. In terms of assembly, homodimer.

It is found in the cytoplasm. The catalysed reaction is glycyl-tRNA(Ala) + H2O = tRNA(Ala) + glycine + H(+). It catalyses the reaction a D-aminoacyl-tRNA + H2O = a tRNA + a D-alpha-amino acid + H(+). Its function is as follows. An aminoacyl-tRNA editing enzyme that deacylates mischarged D-aminoacyl-tRNAs. Also deacylates mischarged glycyl-tRNA(Ala), protecting cells against glycine mischarging by AlaRS. Acts via tRNA-based rather than protein-based catalysis; rejects L-amino acids rather than detecting D-amino acids in the active site. By recycling D-aminoacyl-tRNA to D-amino acids and free tRNA molecules, this enzyme counteracts the toxicity associated with the formation of D-aminoacyl-tRNA entities in vivo and helps enforce protein L-homochirality. This chain is D-aminoacyl-tRNA deacylase, found in Teredinibacter turnerae (strain ATCC 39867 / T7901).